We begin with the raw amino-acid sequence, 247 residues long: Coproheme decarboxylase (247 aa).

Residues arginine 129, 143 to 147 (YPMDK), histidine 170, glutamine 183, and serine 221 contribute to the Fe-coproporphyrin III site. Tyrosine 143 is an active-site residue.

It belongs to the ChdC family. Type 1 subfamily. The cofactor is Fe-coproporphyrin III.

The enzyme catalyses Fe-coproporphyrin III + 2 H2O2 + 2 H(+) = heme b + 2 CO2 + 4 H2O. The catalysed reaction is Fe-coproporphyrin III + H2O2 + H(+) = harderoheme III + CO2 + 2 H2O. It carries out the reaction harderoheme III + H2O2 + H(+) = heme b + CO2 + 2 H2O. Its pathway is porphyrin-containing compound metabolism; protoheme biosynthesis. Functionally, involved in coproporphyrin-dependent heme b biosynthesis. Catalyzes the decarboxylation of Fe-coproporphyrin III (coproheme) to heme b (protoheme IX), the last step of the pathway. The reaction occurs in a stepwise manner with a three-propionate intermediate. This Bacillus cereus (strain B4264) protein is Coproheme decarboxylase.